The sequence spans 407 residues: Phosphopentomutase (407 aa).

Mn(2+) contacts are provided by aspartate 10, aspartate 306, histidine 311, aspartate 347, histidine 348, and histidine 359.

The protein belongs to the phosphopentomutase family. The cofactor is Mn(2+).

It is found in the cytoplasm. The catalysed reaction is 2-deoxy-alpha-D-ribose 1-phosphate = 2-deoxy-D-ribose 5-phosphate. It catalyses the reaction alpha-D-ribose 1-phosphate = D-ribose 5-phosphate. The protein operates within carbohydrate degradation; 2-deoxy-D-ribose 1-phosphate degradation; D-glyceraldehyde 3-phosphate and acetaldehyde from 2-deoxy-alpha-D-ribose 1-phosphate: step 1/2. In terms of biological role, isomerase that catalyzes the conversion of deoxy-ribose 1-phosphate (dRib-1-P) and ribose 1-phosphate (Rib-1-P) to deoxy-ribose 5-phosphate (dRib-5-P) and ribose 5-phosphate (Rib-5-P), respectively. The chain is Phosphopentomutase from Pectobacterium atrosepticum (strain SCRI 1043 / ATCC BAA-672) (Erwinia carotovora subsp. atroseptica).